A 567-amino-acid chain; its full sequence is Pyrethroid hydrolase Ces2e (567 aa).

Residues 1 to 36 (MAQTRAWKSIMPLESLPGWLNAVVWGLLLLFCQVQG) form the signal peptide. Q37 carries the post-translational modification Pyrrolidone carboxylic acid. An intrachain disulfide couples C105 to C132. S237 acts as the Acyl-ester intermediate in catalysis. C289 and C300 are joined by a disulfide. Residues E354 and H465 each act as charge relay system in the active site.

This sequence belongs to the type-B carboxylesterase/lipase family. Expressed in liver.

It localises to the microsome. The catalysed reaction is all-trans-retinyl hexadecanoate + H2O = all-trans-retinol + hexadecanoate + H(+). It catalyses the reaction (-)-trans-permethrin + H2O = (3-phenoxyphenyl)methanol + (1S,3R)-3-(2,2-dichlorovinyl)-2,2-dimethylcyclopropanecarboxylate + H(+). In terms of biological role, carboxylesterase that catalyzes the hydrolysis of pyrethroids pesticides. Hydrolyzes trans-permethrin at a rate about 22-fold higher than cis-permethrin. Also hydrolyzes trans-cypermethrin. Hydrolyzes retinyl esters. The sequence is that of Pyrethroid hydrolase Ces2e from Rattus norvegicus (Rat).